A 342-amino-acid polypeptide reads, in one-letter code: Phosphatidate cytidylyltransferase, mitochondrial (342 aa).

Belongs to the TAM41 family. The cofactor is Mg(2+). It depends on Co(2+) as a cofactor. Cu(2+) serves as cofactor.

The protein resides in the mitochondrion inner membrane. It catalyses the reaction a 1,2-diacyl-sn-glycero-3-phosphate + CTP + H(+) = a CDP-1,2-diacyl-sn-glycerol + diphosphate. It functions in the pathway phospholipid metabolism; CDP-diacylglycerol biosynthesis; CDP-diacylglycerol from sn-glycerol 3-phosphate: step 3/3. Catalyzes the formation of CDP-diacylglycerol (CDP-DAG) from phosphatidic acid (PA) in the mitochondrial inner membrane. Required for the biosynthesis of the dimeric phospholipid cardiolipin, which stabilizes supercomplexes of the mitochondrial respiratory chain in the mitochondrial inner membrane. The sequence is that of Phosphatidate cytidylyltransferase, mitochondrial from Drosophila melanogaster (Fruit fly).